The chain runs to 123 residues: Small ribosomal subunit protein uS13 (123 aa).

The disordered stretch occupies residues 95-123 (GLPVRGQRTKTNARTRKGPIKTVGAKRKK).

The protein belongs to the universal ribosomal protein uS13 family. In terms of assembly, part of the 30S ribosomal subunit. Forms a loose heterodimer with protein S19. Forms two bridges to the 50S subunit in the 70S ribosome.

Its function is as follows. Located at the top of the head of the 30S subunit, it contacts several helices of the 16S rRNA. In the 70S ribosome it contacts the 23S rRNA (bridge B1a) and protein L5 of the 50S subunit (bridge B1b), connecting the 2 subunits; these bridges are implicated in subunit movement. Contacts the tRNAs in the A and P-sites. This Desulfitobacterium hafniense (strain DSM 10664 / DCB-2) protein is Small ribosomal subunit protein uS13.